Here is a 398-residue protein sequence, read N- to C-terminus: Tyrosine--tRNA ligase (398 aa).

The 'HIGH' region signature appears at 48 to 57 (PTGADIHLGH). The short motif at 235 to 239 (KMSKS) is the 'KMSKS' region element. ATP is bound at residue K238. In terms of domain architecture, S4 RNA-binding spans 334–398 (VKLAYLLGAT…GKNKFVRLVL (65 aa)).

Belongs to the class-I aminoacyl-tRNA synthetase family. TyrS type 2 subfamily. In terms of assembly, homodimer.

Its subcellular location is the cytoplasm. It carries out the reaction tRNA(Tyr) + L-tyrosine + ATP = L-tyrosyl-tRNA(Tyr) + AMP + diphosphate + H(+). In terms of biological role, catalyzes the attachment of tyrosine to tRNA(Tyr) in a two-step reaction: tyrosine is first activated by ATP to form Tyr-AMP and then transferred to the acceptor end of tRNA(Tyr). The chain is Tyrosine--tRNA ligase from Trichormus variabilis (strain ATCC 29413 / PCC 7937) (Anabaena variabilis).